We begin with the raw amino-acid sequence, 159 residues long: Urease subunit beta 2 (159 aa).

Residues 1–24 (MAKEPTKAAHPQPEQTKTNHKAHR) are disordered.

The protein belongs to the urease beta subunit family. Heterotrimer of UreA (gamma), UreB (beta) and UreC (alpha) subunits. Three heterotrimers associate to form the active enzyme.

The protein resides in the cytoplasm. The catalysed reaction is urea + 2 H2O + H(+) = hydrogencarbonate + 2 NH4(+). The protein operates within nitrogen metabolism; urea degradation; CO(2) and NH(3) from urea (urease route): step 1/1. Functionally, disrupting the ure2 operon has no effect on urease activity, or pathogen survival in BALB/c mice when inoculated by gavage, but confers slightly enhanced resistance to low pH killing in vitro. In Brucella suis biovar 1 (strain 1330), this protein is Urease subunit beta 2.